Reading from the N-terminus, the 376-residue chain is Protein RecA (376 aa).

65 to 72 (GPESSGKT) contacts ATP. A disordered region spans residues 316–376 (EHDEIFTSVR…GDDLSDDDIY (61 aa)). Residues 331–350 (GEKKDSDEDPGDNKKSKDSA) are compositionally biased toward basic and acidic residues. Residues 366–376 (PGDDLSDDDIY) are compositionally biased toward acidic residues.

It belongs to the RecA family.

The protein localises to the cytoplasm. Its function is as follows. Can catalyze the hydrolysis of ATP in the presence of single-stranded DNA, the ATP-dependent uptake of single-stranded DNA by duplex DNA, and the ATP-dependent hybridization of homologous single-stranded DNAs. It interacts with LexA causing its activation and leading to its autocatalytic cleavage. This chain is Protein RecA, found in Oenococcus oeni (strain ATCC BAA-331 / PSU-1).